A 237-amino-acid polypeptide reads, in one-letter code: MRHIFQRLLPRRLWLAGLPCLALLGCVQNHNKPAIDTPAEEKIPVYQLADYLSTECSDIWALQGKSTETNPLYWLRAMDCADRLMPAQSRQQARQYDDGSWQNTFKQGILLADAKITPYERRQLVARIEALSTEIPAQVRPLYQLWRDGQALQLQLAEERQRYSKLQQSSDSELDTLRQQHHVLQQQLELTTRKLENLTDIERQLSTRKPAGNFSPDTPHESEKPAPSTHEVTPDEP.

Positions 1–25 (MRHIFQRLLPRRLWLAGLPCLALLG) form a signal peptide, tat-type signal. The tract at residues 201-237 (IERQLSTRKPAGNFSPDTPHESEKPAPSTHEVTPDEP) is disordered.

Post-translationally, exported by the Tat system. The position of the signal peptide cleavage has not been experimentally proven. Can also be exported by the Sec system.

This is an uncharacterized protein from Escherichia coli (strain K12).